Consider the following 704-residue polypeptide: mRNA (2'-O-methyladenosine-N(6)-)-methyltransferase (704 aa).

Residues 1–33 (MANENHGSPREEASLLSHSPGTSNQSQPCSPKP) form a disordered region. The segment covering 16–29 (LSHSPGTSNQSQPC) has biased composition (polar residues). S30 bears the Phosphoserine mark. A WW domain is found at 43–77 (ELVHAGWEKCWSRRENRPYYFNRFTNQSLWEMPVL). Positions 88-151 (GLNATPLPQD…PSSPSIPGTP (64 aa)) are disordered. A Nuclear localization signal motif is present at residues 109–113 (KPRKR). S116 is modified (phosphoserine). Residues 136-149 (PTGQSVPSSPSIPG) show a composition bias toward polar residues. T152 carries the phosphothreonine modification. Residues R235 and R265 each coordinate substrate. 553 to 556 (NPPF) serves as a coordination point for S-adenosyl-L-methionine. Residues E558 and 588–592 (WREPP) each bind substrate. Residue 614 to 616 (FEH) coordinates S-adenosyl-L-methionine. The segment at 663 to 704 (LSAAYRQSGRSHSSGSSSSSSSEAKDRDSGREQGPSREPHPT) is disordered. The short motif at 669–684 (QSGRSHSSGSSSSSSS) is the Nuclear localization signal element. The span at 670–684 (SGRSHSSGSSSSSSS) shows a compositional bias: low complexity. Residues 685 to 704 (EAKDRDSGREQGPSREPHPT) show a composition bias toward basic and acidic residues.

Belongs to the CAPAM family. Interacts with POLR2A; interacts with the phosphorylated C-terminal domain (CTD) of POLR2A. Ubiquitous.

It localises to the nucleus. The enzyme catalyses a 5'-end (N(7)-methyl 5'-triphosphoguanosine)-(2'-O-methyladenosine) in mRNA + S-adenosyl-L-methionine = a 5'-end (N(7)-methyl 5'-triphosphoguanosine)-(N(6),2'-O-dimethyladenosine) in mRNA + S-adenosyl-L-homocysteine + H(+). Cap-specific adenosine methyltransferase activity is inhibited by zinc. Cap-specific adenosine methyltransferase that catalyzes formation of N(6),2'-O-dimethyladenosine cap (m6A(m)) by methylating the adenosine at the second transcribed position of capped mRNAs. Recruited to the early elongation complex of RNA polymerase II (RNAPII) via interaction with POLR2A and mediates formation of m6A(m) co-transcriptionally. This Homo sapiens (Human) protein is mRNA (2'-O-methyladenosine-N(6)-)-methyltransferase.